The following is a 330-amino-acid chain: MNVYYEQDADLKHLQGKNIAVLGYGSQGHAHALNLKESGLNVCVGLRTDSSSCAKARQAGLEVNTIADAVKWADIIMILLPDQYQKAIYETEIAPNLETGNTLAFAHGFNIHYKQIVPPETVNVIMIAPKSPGHLVRRTFTEGNGVPCLIAVHQDYTGNAKEQALAWAKGLGGAKAGVIETTIKDETETDLFGEQAVLCGGSAELIKAGFETLVEAGYPEELAYFECLHELKLIVDLYYEGGLSRMNYSVSDTAEYGGMTRGPRLITPAVKAEMKKILEEVQDGRFAKEFIDECNSGYKNLTSLRESNTNHPIEKVGAKLRNMMSWLIKK.

The region spanning 1 to 181 (MNVYYEQDAD…GGAKAGVIET (181 aa)) is the KARI N-terminal Rossmann domain. NADP(+)-binding positions include 24–27 (YGSQ), R47, S50, S52, and 82–85 (DQYQ). The active site involves H107. G133 is an NADP(+) binding site. Residues 182–327 (TIKDETETDL…AKLRNMMSWL (146 aa)) form the KARI C-terminal knotted domain. Mg(2+) contacts are provided by D190, E194, E226, and E230. S251 contacts substrate.

The protein belongs to the ketol-acid reductoisomerase family. Mg(2+) is required as a cofactor.

It carries out the reaction (2R)-2,3-dihydroxy-3-methylbutanoate + NADP(+) = (2S)-2-acetolactate + NADPH + H(+). The enzyme catalyses (2R,3R)-2,3-dihydroxy-3-methylpentanoate + NADP(+) = (S)-2-ethyl-2-hydroxy-3-oxobutanoate + NADPH + H(+). It participates in amino-acid biosynthesis; L-isoleucine biosynthesis; L-isoleucine from 2-oxobutanoate: step 2/4. It functions in the pathway amino-acid biosynthesis; L-valine biosynthesis; L-valine from pyruvate: step 2/4. In terms of biological role, involved in the biosynthesis of branched-chain amino acids (BCAA). Catalyzes an alkyl-migration followed by a ketol-acid reduction of (S)-2-acetolactate (S2AL) to yield (R)-2,3-dihydroxy-isovalerate. In the isomerase reaction, S2AL is rearranged via a Mg-dependent methyl migration to produce 3-hydroxy-3-methyl-2-ketobutyrate (HMKB). In the reductase reaction, this 2-ketoacid undergoes a metal-dependent reduction by NADPH to yield (R)-2,3-dihydroxy-isovalerate. The chain is Ketol-acid reductoisomerase (NADP(+)) from Prosthecochloris aestuarii (strain DSM 271 / SK 413).